A 688-amino-acid chain; its full sequence is Protein sel-1 homolog 2 (688 aa).

Residues methionine 1 to threonine 18 form the signal peptide. Over lysine 19–threonine 662 the chain is Extracellular. Asparagine 34 carries N-linked (GlcNAc...) asparagine glycosylation. Sel1-like repeat units lie at residues glycine 107–asparagine 142, leucine 143–serine 178, tyrosine 179–serine 214, methionine 215–alanine 250, valine 297–serine 333, alanine 334–asparagine 370, alanine 371–tryptophan 406, proline 407–glutamine 442, proline 443–histidine 478, alanine 551–histidine 586, and alanine 588–proline 623. A glycan (N-linked (GlcNAc...) asparagine) is linked at asparagine 162. Residues isoleucine 663–leucine 683 form a helical membrane-spanning segment. The Cytoplasmic portion of the chain corresponds to arginine 684–arginine 688.

The protein belongs to the sel-1 family.

The protein localises to the membrane. It localises to the cell projection. It is found in the cilium. Its subcellular location is the nucleus speckle. In Rattus norvegicus (Rat), this protein is Protein sel-1 homolog 2 (Sel1l2).